The primary structure comprises 439 residues: IAA-amino acid hydrolase ILR1-like 2 (439 aa).

The signal sequence occupies residues 1-21; it reads MALNKLLSLTFQLLLFLLSVS. Mn(2+) contacts are provided by Cys-137, His-139, Glu-173, His-197, and His-397. Positions 436-439 match the Prevents secretion from ER motif; it reads HEEL.

It belongs to the peptidase M20 family. In terms of assembly, monomer. Mn(2+) serves as cofactor. In terms of tissue distribution, expressed in leaves, stems, siliques, seeds and flowers. Detected in the distal tips of cotyledons and seedling leaves, hydathodes of leaves from mature plants, pollen, ovules and developing seeds.

The protein localises to the endoplasmic reticulum lumen. Its function is as follows. Hydrolyzes certain amino acid conjugates of the plant growth regulator indole-3-acetic acid (IAA), including IAA-Ala, IAA-Leu, IAA-Met, IAA-Phe, IAA-Ser, IAA-Thr, IAA-Tyr and IAA-Val. Is the most efficient enzyme of the ILL family for IAA-Ala. Not important for IAA-Leu hydrolysis in roots. May act with ILR1 to provide free IAA to germinating seedlings. The protein is IAA-amino acid hydrolase ILR1-like 2 of Arabidopsis thaliana (Mouse-ear cress).